The sequence spans 587 residues: Glutaconyl-CoA decarboxylase subunit alpha (587 aa).

In terms of domain architecture, CoA carboxyltransferase N-terminal spans 31 to 298 (LKKIEEEIHQ…YDPEFFRVDD (268 aa)). The segment at 31–558 (LKKIEEEIHQ…RGYVEAFTEA (528 aa)) is carboxyltransferase. A CoA carboxyltransferase C-terminal domain is found at 295–558 (RVDDPKAPAF…RGYVEAFTEA (264 aa)).

As to quaternary structure, heterooctamer consisting of two alpha, two beta, two gamma and two delta subunits.

It carries out the reaction (2E)-glutaconyl-CoA + Na(+)(in) + H(+) = (2E)-butenoyl-CoA + Na(+)(out) + CO2. It functions in the pathway amino-acid degradation; L-glutamate degradation via hydroxyglutarate pathway; crotonoyl-CoA from L-glutamate: step 5/5. Decarboxylase subunit of the primary sodium pump glutaconyl-CoA decarboxylase (GCD). The protein is Glutaconyl-CoA decarboxylase subunit alpha (gcdA) of Acidaminococcus fermentans (strain ATCC 25085 / DSM 20731 / CCUG 9996 / CIP 106432 / VR4).